A 374-amino-acid polypeptide reads, in one-letter code: Phenoloxidase-activating enzyme 1 (374 aa).

The first 19 residues, 1-19 (MWKSLVFFVSALIWSFGSS), serve as a signal peptide directing secretion. The propeptide at 20–120 (QDCTTPTGSR…QCGIDTTGDR (101 aa)) is activation peptide. The region spanning 21 to 74 (DCTTPTGSRSNCVSLYQCQPLYNAFEQRPLPTHVVSYLGRSQCGFEGYVPRVCC) is the Clip domain. Cystine bridges form between C22-C73, C32-C63, and C38-C74. Residues 83–97 (ATSARPTQAPTQGSS) are compositionally biased toward polar residues. The tract at residues 83-114 (ATSARPTQAPTQGSSDVFPEDSSPAPRNQCGI) is disordered. A Peptidase S1 domain is found at 121–370 (VYGGTITDLD…YIDWIQNTIA (250 aa)). C151 and C167 form a disulfide bridge. The active-site Charge relay system is H166. Ca(2+) contacts are provided by E186 and D194. D228 functions as the Charge relay system in the catalytic mechanism. Disulfide bonds link C292-C307 and C317-C346. The Charge relay system role is filled by S321.

Belongs to the peptidase S1 family. CLIP subfamily. Activated by the removal of the N-terminal inhibitory propeptide. In terms of tissue distribution, expressed in hemocytes.

It is found in the secreted. Inhibited by aprotenin. Not inhibited by EDTA, PMSF or leupeptin. In terms of biological role, serine protease which, by cleaving and activating prophenoloxidase (PPO1) after immune challenge, plays an essential role in the melanization immune response to wounding. In Spodoptera litura (Asian cotton leafworm), this protein is Phenoloxidase-activating enzyme 1.